Here is a 608-residue protein sequence, read N- to C-terminus: Elongation factor 4 (608 aa).

A tr-type G domain is found at 11–193 (DHIRNFSIVA…AIVNRLPPPK (183 aa)). Residues 23–28 (DHGKST) and 140–143 (NKID) contribute to the GTP site.

The protein belongs to the TRAFAC class translation factor GTPase superfamily. Classic translation factor GTPase family. LepA subfamily.

It is found in the cell inner membrane. It carries out the reaction GTP + H2O = GDP + phosphate + H(+). In terms of biological role, required for accurate and efficient protein synthesis under certain stress conditions. May act as a fidelity factor of the translation reaction, by catalyzing a one-codon backward translocation of tRNAs on improperly translocated ribosomes. Back-translocation proceeds from a post-translocation (POST) complex to a pre-translocation (PRE) complex, thus giving elongation factor G a second chance to translocate the tRNAs correctly. Binds to ribosomes in a GTP-dependent manner. The protein is Elongation factor 4 of Agrobacterium fabrum (strain C58 / ATCC 33970) (Agrobacterium tumefaciens (strain C58)).